The sequence spans 101 residues: UPF0235 protein Cpha266_2081 (101 aa).

It belongs to the UPF0235 family.

This chain is UPF0235 protein Cpha266_2081, found in Chlorobium phaeobacteroides (strain DSM 266 / SMG 266 / 2430).